Consider the following 530-residue polypeptide: Phosphoenolpyruvate carboxykinase (ATP) (530 aa).

Residues Arg57, Tyr193, and Lys199 each contribute to the substrate site. ATP contacts are provided by residues Lys199, His218, and 234–242; that span reads GLSGTGKTT. 2 residues coordinate Mn(2+): Lys199 and His218. Residue Asp255 coordinates Mn(2+). 3 residues coordinate ATP: Glu283, Arg320, and Thr445. Residue Arg320 participates in substrate binding.

Belongs to the phosphoenolpyruvate carboxykinase (ATP) family. Mn(2+) serves as cofactor.

Its subcellular location is the cytoplasm. The catalysed reaction is oxaloacetate + ATP = phosphoenolpyruvate + ADP + CO2. Its pathway is carbohydrate biosynthesis; gluconeogenesis. Involved in the gluconeogenesis. Catalyzes the conversion of oxaloacetate (OAA) to phosphoenolpyruvate (PEP) through direct phosphoryl transfer between the nucleoside triphosphate and OAA. This chain is Phosphoenolpyruvate carboxykinase (ATP), found in Leptospira biflexa serovar Patoc (strain Patoc 1 / Ames).